A 287-amino-acid polypeptide reads, in one-letter code: mRNA-capping enzyme regulatory subunit OPG124 (287 aa).

Belongs to the orthopoxvirus mRNA-capping enzyme regulatory subunit family. Interacts with the catalytic subunit OPG113.

It is found in the virion. Functionally, regulatory subunit of the mRNA cap enzyme which stabilizes the catalytic subunit and enhances its methyltransferase activity through an allosteric mechanism. Heterodimeric mRNA capping enzyme catalyzes the linkage of a N7-methyl-guanosine moiety to the first transcribed nucleotide (cap 0 structure), whereas the methyltransferase OPG102 is responsible for a second methylation at the 2'-O position of the ribose (cap 1 structure). Also involved in early viral gene transcription termination and intermediate viral gene transcription initiation. Early gene transcription termination requires the termination factor VTF, the DNA-dependent ATPase NPH-I/OPG123 and the RAP94/OPG109 subunit of the viral RNA polymerase, as well as the presence of a specific termination motif. Binds, together with RAP94/OPG109, to the termination motif 5'-UUUUUNU-3' in the nascent early mRNA. The protein is mRNA-capping enzyme regulatory subunit OPG124 (OPG124) of Vaccinia virus (strain Copenhagen) (VACV).